Consider the following 563-residue polypeptide: Glucocorticoid modulatory element-binding protein 1 (563 aa).

At Ala2 the chain carries N-acetylalanine. In terms of domain architecture, SAND spans 72–156 (ASTIEANEDM…RKMMDSGQID (85 aa)). Residue Cys103 participates in Zn(2+) binding. Positions 129, 133, 136, and 147 each coordinate DNA. Zn(2+)-binding residues include His160, Cys164, and Cys168. The stretch at 304–355 (MDTVKKVLDNRKNQVEQGEEQFLYTLTDLERQLEEQKKQAQDHRLKSQTVQN) forms a coiled coil. The segment at 360-385 (PVSTPKPPKRPRLQRPASTTVLSPSP) is disordered.

In terms of assembly, homodimer, and heterodimer of GMEB1 and GMEB2. Interacts with TRIM63. Interacts with the glucocorticoid receptor (NR3C1) and NCOA2/TIF2. May interact with HSP27 and CREB-binding protein (CBP).

Its subcellular location is the nucleus. The protein resides in the cytoplasm. Functionally, trans-acting factor that binds to glucocorticoid modulatory elements (GME) present in the TAT (tyrosine aminotransferase) promoter and increases sensitivity to low concentrations of glucocorticoids. Also binds to the transferrin receptor promoter. The polypeptide is Glucocorticoid modulatory element-binding protein 1 (GMEB1) (Bos taurus (Bovine)).